Here is a 450-residue protein sequence, read N- to C-terminus: Chromosomal replication initiator protein DnaA (450 aa).

The segment at 1–73 (MNTKELWIEV…KNILKKLTGI (73 aa)) is domain I, interacts with DnaA modulators. A domain II region spans residues 73–104 (IQYNISFELEKNINKQASVISKIDTLTENNNL). The tract at residues 105-326 (AYYENYTFEN…GAIKRLLFLA (222 aa)) is domain III, AAA+ region. 4 residues coordinate ATP: Gly149, Gly151, Lys152, and Thr153. The segment at 327–450 (VMNKKPNEII…NAIRRKIEGR (124 aa)) is domain IV, binds dsDNA.

The protein belongs to the DnaA family. As to quaternary structure, oligomerizes as a right-handed, spiral filament on DNA at oriC.

The protein localises to the cytoplasm. Functionally, plays an essential role in the initiation and regulation of chromosomal replication. ATP-DnaA binds to the origin of replication (oriC) to initiate formation of the DNA replication initiation complex once per cell cycle. Binds the DnaA box (a 9 base pair repeat at the origin) and separates the double-stranded (ds)DNA. Forms a right-handed helical filament on oriC DNA; dsDNA binds to the exterior of the filament while single-stranded (ss)DNA is stabiized in the filament's interior. The ATP-DnaA-oriC complex binds and stabilizes one strand of the AT-rich DNA unwinding element (DUE), permitting loading of DNA polymerase. After initiation quickly degrades to an ADP-DnaA complex that is not apt for DNA replication. Binds acidic phospholipids. This chain is Chromosomal replication initiator protein DnaA, found in Spiroplasma citri.